The sequence spans 147 residues: Protein MC014 (147 aa).

It is found in the host nucleus. The chain is Protein MC014 (MC014) from Homo sapiens (Human).